Reading from the N-terminus, the 224-residue chain is UPF0173 metal-dependent hydrolase Memar_1421 (224 aa).

This sequence belongs to the UPF0173 family.

This is UPF0173 metal-dependent hydrolase Memar_1421 from Methanoculleus marisnigri (strain ATCC 35101 / DSM 1498 / JR1).